A 137-amino-acid chain; its full sequence is Protein E6 (137 aa).

2 zinc fingers span residues 17-53 (CVWCREPLTEVDAFRCMIKDFHVVYRDGVKFGACTTC) and 90-127 (CCYCGGKLTKNEKQRHVLYNEPFCKTRSNIIRGRCYDC).

It belongs to the papillomaviridae E6 protein family. In terms of assembly, forms homodimers. Interacts with ubiquitin-protein ligase UBE3A/E6-AP; this interaction stimulates UBE3A ubiquitin activity. Interacts with host BAK1.

Its subcellular location is the host cytoplasm. The protein localises to the host nucleus. In terms of biological role, plays a major role in the induction and maintenance of cellular transformation. E6 associates with host UBE3A/E6-AP ubiquitin-protein ligase and modulates its activity. Protects host keratinocytes from apoptosis by mediating the degradation of host BAK1. May also inhibit host immune response. This is Protein E6 from Bos taurus (Bovine).